Reading from the N-terminus, the 817-residue chain is Rho GTPase-activating protein gacII (817 aa).

One can recognise a Rho-GAP domain in the interval 20–204 (TTIVKIGTPK…TLIEEFQYIS (185 aa)). The SH3 domain occupies 238 to 298 (EDYLIAKANT…SQTYVDIIDI (61 aa)). The segment covering 318 to 339 (ASTILHTPPTSSSSSSSSSSSS) has biased composition (low complexity). 3 disordered regions span residues 318 to 638 (ASTI…NIPV), 691 to 771 (LGGQ…QQQQ), and 783 to 817 (LPPQ…FNKN). Over residues 340 to 358 (ILLTDNQPKLCSSTPRINN) the composition is skewed to polar residues. The segment covering 359-391 (SPSSFSPSLSSTTPQLLVQQSPRQSPRQIPSIS) has biased composition (low complexity). A compositionally biased stretch (polar residues) spans 396–438 (PNNTNQPSFGHGTLQRTSTGYFSSKPLSISQPINMSKPTNMSP). Positions 461 to 471 (PPLPTKPPPLT) are enriched in pro residues. A compositionally biased stretch (low complexity) spans 472-498 (IPSSSSLPTTPIKQQPQQPIQQPLTPQ). Residues 509–532 (LSSSVNTANTGNCANILSPNSDRY) are compositionally biased toward polar residues. Low complexity-rich tracts occupy residues 534–568 (SSRS…SSTS), 577–587 (KSKSSKNSPSK), and 607–624 (ITTT…TIAT). Residues 625 to 635 (TPPPPSKPLPN) are compositionally biased toward pro residues. The segment covering 705 to 722 (KSQSSYLDNNNLPSRNTN) has biased composition (polar residues). Residues 725-734 (NLPPRPPPLN) show a composition bias toward pro residues. Low complexity-rich tracts occupy residues 735–744 (IPQQQQQYKP) and 752–771 (QSPQ…QQQQ). The span at 785–803 (PQNTNLSGKNLQRSSTSML) shows a compositional bias: polar residues. A compositionally biased stretch (pro residues) spans 807–817 (LPPPPFSFNKN).

It is found in the cytoplasm. In terms of biological role, rho GTPase-activating protein involved in the signal transduction pathway. The protein is Rho GTPase-activating protein gacII (gacII) of Dictyostelium discoideum (Social amoeba).